The following is a 534-amino-acid chain: Probable DNA ligase (534 aa).

Glu-213 serves as a coordination point for ATP. The active-site N6-AMP-lysine intermediate is the Lys-215. Residues Arg-220, Arg-235, Glu-264, Phe-303, Arg-375, and Lys-381 each coordinate ATP.

It belongs to the ATP-dependent DNA ligase family. It depends on Mg(2+) as a cofactor.

It catalyses the reaction ATP + (deoxyribonucleotide)n-3'-hydroxyl + 5'-phospho-(deoxyribonucleotide)m = (deoxyribonucleotide)n+m + AMP + diphosphate.. DNA ligase that seals nicks in double-stranded DNA during DNA replication, DNA recombination and DNA repair. This is Probable DNA ligase from Mycolicibacterium vanbaalenii (strain DSM 7251 / JCM 13017 / BCRC 16820 / KCTC 9966 / NRRL B-24157 / PYR-1) (Mycobacterium vanbaalenii).